Reading from the N-terminus, the 266-residue chain is Tryptophan synthase alpha chain (266 aa).

Catalysis depends on proton acceptor residues Glu-49 and Asp-60.

It belongs to the TrpA family. Tetramer of two alpha and two beta chains.

The catalysed reaction is (1S,2R)-1-C-(indol-3-yl)glycerol 3-phosphate + L-serine = D-glyceraldehyde 3-phosphate + L-tryptophan + H2O. It participates in amino-acid biosynthesis; L-tryptophan biosynthesis; L-tryptophan from chorismate: step 5/5. In terms of biological role, the alpha subunit is responsible for the aldol cleavage of indoleglycerol phosphate to indole and glyceraldehyde 3-phosphate. This is Tryptophan synthase alpha chain from Synechococcus elongatus (strain ATCC 33912 / PCC 7942 / FACHB-805) (Anacystis nidulans R2).